Reading from the N-terminus, the 207-residue chain is Small ribosomal subunit protein uS4c (207 aa).

Residues 92-153 (MRLDNILFRL…PKTYQSILSK (62 aa)) enclose the S4 RNA-binding domain.

It belongs to the universal ribosomal protein uS4 family. In terms of assembly, part of the 30S ribosomal subunit. Contacts protein S5. The interaction surface between S4 and S5 is involved in control of translational fidelity.

The protein resides in the plastid. It localises to the chloroplast. Its function is as follows. One of the primary rRNA binding proteins, it binds directly to 16S rRNA where it nucleates assembly of the body of the 30S subunit. With S5 and S12 plays an important role in translational accuracy. This is Small ribosomal subunit protein uS4c (rps4) from Equisetum hyemale (Dutch rush).